Reading from the N-terminus, the 342-residue chain is Galactose mutarotase (342 aa).

Ala-2 is modified (N-acetylalanine). Ser-14 carries the phosphoserine modification. Beta-D-galactose-binding positions include 81–82 (NR) and His-107. Ser-124 is subject to Phosphoserine. His-176 serves as the catalytic Proton donor. Beta-D-galactose is bound by residues 176–178 (HSY), Asp-243, Gln-279, and Glu-307. Residue Glu-307 is the Proton acceptor of the active site.

It belongs to the aldose epimerase family. Monomer.

Its subcellular location is the cytoplasm. It carries out the reaction alpha-D-galactose = beta-D-galactose. The enzyme catalyses alpha-D-glucose = beta-D-glucose. It participates in carbohydrate metabolism; hexose metabolism. It functions in the pathway carbohydrate metabolism; galactose metabolism. Its function is as follows. Mutarotase that catalyzes the interconversion of beta-D-galactose and alpha-D-galactose during galactose metabolism. Beta-D-galactose is metabolized in the liver into glucose 1-phosphate, the primary metabolic fuel, by the action of four enzymes that constitute the Leloir pathway: GALM, GALK1 (galactokinase), GALT (galactose-1-phosphate uridylyltransferase) and GALE (UDP-galactose-4'-epimerase). Involved in the maintenance of the equilibrium between the beta- and alpha-anomers of galactose, therefore ensuring a sufficient supply of the alpha-anomer for GALK1. Also active on D-glucose although shows a preference for galactose over glucose. The chain is Galactose mutarotase from Homo sapiens (Human).